The chain runs to 322 residues: Solute carrier family 25 member 16 (322 aa).

Solcar repeat units follow at residues F34–F120, S128–V219, and L241–F322.

It belongs to the mitochondrial carrier (TC 2.A.29) family.

The protein localises to the mitochondrion inner membrane. In terms of biological role, may be involved in the transport of coenzyme A in the mitochondrial matrix. Very little is known about the physiological function of this carrier. This chain is Solute carrier family 25 member 16, found in Rattus norvegicus (Rat).